The chain runs to 94 residues: Small ribosomal subunit protein bS6 (94 aa).

It belongs to the bacterial ribosomal protein bS6 family.

Functionally, binds together with bS18 to 16S ribosomal RNA. This chain is Small ribosomal subunit protein bS6, found in Clostridium botulinum (strain 657 / Type Ba4).